Reading from the N-terminus, the 439-residue chain is Sex-determination protein fem-3 (439 aa).

The segment at 21 to 45 (RRLKRKANDDDDDDETVRERVDDAE) is disordered.

As to quaternary structure, component of a complex containing fem-1, fem-2 and fem-3. Interacts with fem-1 and fem-2 (via N-terminus). Part of a E3 ubiquitin-protein ligase complex, at least composed of cul-2, elc-1, tra-1, fem-1, fem-2 and fem-3; mediates the ubiquitination and subsequent proteasomal degradation of tra-1. Interacts with tra-1. Interacts with sel-10. Interacts with tra-2.

In terms of biological role, required for male development. In XO (male) animals, fem-3 directs male differentiation in all tissues. In XX (hermaphrodite) animals, it specifies the first 80 or so germ cells to be sperm. Negatively regulates male development when bound to tra-2. Together with fem-2 associates with the CBC(fem-1) E3 ubiquitin-protein ligase complex which mediates the ubiquitination and subsequent proteasomal degradation of tra-1. The polypeptide is Sex-determination protein fem-3 (Caenorhabditis remanei (Caenorhabditis vulgaris)).